The primary structure comprises 131 residues: Large ribosomal subunit protein bL17 (131 aa).

The protein belongs to the bacterial ribosomal protein bL17 family. In terms of assembly, part of the 50S ribosomal subunit. Contacts protein L32.

This is Large ribosomal subunit protein bL17 from Thermotoga neapolitana (strain ATCC 49049 / DSM 4359 / NBRC 107923 / NS-E).